An 83-amino-acid chain; its full sequence is MVVIRLARGGAKARPFFNIVVADKRTRRDGRFIERLGFYNPIATANEESIRIAQDRLTYWRSVGAQASPTVERLISQAAKKAA.

It belongs to the bacterial ribosomal protein bS16 family.

This chain is Small ribosomal subunit protein bS16, found in Albidiferax ferrireducens (strain ATCC BAA-621 / DSM 15236 / T118) (Rhodoferax ferrireducens).